Reading from the N-terminus, the 101-residue chain is Interleukin-8 (101 aa).

The first 22 residues, 1–22, serve as a signal peptide directing secretion; it reads MTSKLVVALLAAFMLSAALCEA. Position 27 is a citrulline (Arg-27). 2 disulfide bridges follow: Cys-34/Cys-61 and Cys-36/Cys-77.

It belongs to the intercrine alpha (chemokine CxC) family. In terms of assembly, homodimer. Interacts with TNFAIP6 (via Link domain); this interaction interferes with chemokine binding to glycosaminoglycans. Post-translationally, citrullination at Arg-27 prevents proteolysis, and dampens tissue inflammation, it also enhances leukocytosis, possibly through impaired chemokine clearance from the blood circulation.

It is found in the secreted. In terms of biological role, chemotactic factor that mediates inflammatory response by attracting neutrophils, basophils, and T-cells to clear pathogens and protect the host from infection. Also plays an important role in neutrophil activation. Released in response to an inflammatory stimulus, exerts its effect by binding to the G-protein-coupled receptors CXCR1 and CXCR2, primarily found in neutrophils, monocytes and endothelial cells. G-protein heterotrimer (alpha, beta, gamma subunits) constitutively binds to CXCR1/CXCR2 receptor and activation by IL8 leads to beta and gamma subunits release from Galpha (GNAI2 in neutrophils) and activation of several downstream signaling pathways including PI3K and MAPK pathways. The chain is Interleukin-8 (CXCL8) from Felis catus (Cat).